A 254-amino-acid polypeptide reads, in one-letter code: Cell division protein ZapD (254 aa).

The protein belongs to the ZapD family. As to quaternary structure, interacts with FtsZ.

The protein resides in the cytoplasm. Its function is as follows. Cell division factor that enhances FtsZ-ring assembly. Directly interacts with FtsZ and promotes bundling of FtsZ protofilaments, with a reduction in FtsZ GTPase activity. This chain is Cell division protein ZapD, found in Idiomarina loihiensis (strain ATCC BAA-735 / DSM 15497 / L2-TR).